Consider the following 75-residue polypeptide: U6-lycotoxin-Ls1f (75 aa).

The signal sequence occupies residues 1–21; the sequence is MKLLLFTALVLVVISLVEVEA. Residues 22–25 constitute a propeptide that is removed on maturation; the sequence is ENER.

The protein belongs to the neurotoxin 19 (CSTX) family. 06 (U6-Lctx) subfamily. In terms of processing, contains 4 disulfide bonds. In terms of tissue distribution, expressed by the venom gland.

The protein localises to the secreted. This is U6-lycotoxin-Ls1f from Lycosa singoriensis (Wolf spider).